The following is a 582-amino-acid chain: Enhancer of polycomb-like protein 1 (582 aa).

The stretch at 238 to 295 (RDAQSADKLRRLRKELEDARQLVALVRQRELARKEMLSMERQIFLQRSEVKEMKRKLN) forms a coiled coil. The tract at residues 323–351 (PEQPKKKPAEAPAAQRPTAPQIRMPQKPG) is disordered. A coiled-coil region spans residues 352–385 (TQAADDMQLLEDVQAEKENEILRDIKQNIAKHIK). The segment covering 539–555 (AQAHAQAQAQKRLQAEQ) has biased composition (low complexity). The segment at 539 to 582 (AQAHAQAQAQKRLQAEQTTTNNGPPNIGHTMGSNPGPGAVASTS) is disordered.

The protein belongs to the enhancer of polycomb family. As to quaternary structure, component of the NuA4 histone acetyltransferase complex.

It localises to the nucleus. In terms of biological role, component of the NuA4 histone acetyltransferase complex which is involved in transcriptional activation of selected genes principally by acetylation of nucleosomal histone H4 and H2A. The NuA4 complex is also involved in DNA repair. Involved in gene silencing by neighboring heterochromatin, blockage of the silencing spreading along the chromosome, and required for cell cycle progression through G2/M. In Aspergillus fumigatus (strain ATCC MYA-4609 / CBS 101355 / FGSC A1100 / Af293) (Neosartorya fumigata), this protein is Enhancer of polycomb-like protein 1 (epl1).